Consider the following 381-residue polypeptide: Chymosin (381 aa).

A signal peptide spans 1–16; that stretch reads MRCLVVLLAVFALSQG. Positions 17–58 are cleaved as a propeptide — activation peptide; it reads AEITRIPLYKGKSLRKALKEHGLLEDFLQKQQYGISSKYSGF. The region spanning 74–378 is the Peptidase A1 domain; it reads YFGKIYLGTP…DRANNLVGLA (305 aa). Residue D92 is part of the active site. Intrachain disulfides connect C105/C110 and C265/C269. The active site involves D274. A disulfide bond links C308 and C341.

It belongs to the peptidase A1 family. In terms of assembly, monomer.

The enzyme catalyses Broad specificity similar to that of pepsin A. Clots milk by cleavage of a single 104-Ser-Phe-|-Met-Ala-107 bond in kappa-chain of casein.. Functionally, chymosin is synthesized in the mucosa of the abomasum (fourth stomach) of young (unweaned) ruminants. The enzyme hydrolyzes casein to paracasein. This chain is Chymosin (CYM), found in Bos taurus (Bovine).